The primary structure comprises 320 residues: Probable trehalose-phosphate phosphatase C (320 aa).

It belongs to the trehalose phosphatase family. Requires a divalent metal cation as cofactor.

It carries out the reaction alpha,alpha-trehalose 6-phosphate + H2O = alpha,alpha-trehalose + phosphate. It functions in the pathway glycan biosynthesis; trehalose biosynthesis. In terms of biological role, removes the phosphate from trehalose 6-phosphate to produce free trehalose. Trehalose accumulation in plant may improve abiotic stress tolerance. In Arabidopsis thaliana (Mouse-ear cress), this protein is Probable trehalose-phosphate phosphatase C (TPPC).